Here is a 535-residue protein sequence, read N- to C-terminus: EH domain-containing protein 3 (535 aa).

M1 carries the post-translational modification N-acetylmethionine. Positions 55–286 (FDNKPMVLLV…DLFRDIQSLP (232 aa)) constitute a Dynamin-type G domain. A G1 motif region spans residues 65-72 (GQYSTGKT). Residue 65–72 (GQYSTGKT) participates in ATP binding. The interval 91–92 (EP) is G2 motif. The segment at 153 to 156 (DTPG) is G3 motif. The stretch at 198-227 (DEFSEVIKALKNHEDKMRVVLNKADQIETQ) forms a coiled coil. A G4 motif region spans residues 219 to 222 (NKAD). ATP is bound at residue K220. I243 is a region of interest (G5 motif). ATP is bound at residue W258. Residue K315 forms a Glycyl lysine isopeptide (Lys-Gly) (interchain with G-Cter in SUMO) linkage. 2 positions are modified to phosphoserine: S349 and S456. Residues 444–532 (DKPMYDEIFY…AHLLPPSKRK (89 aa)) form the EH domain. One can recognise an EF-hand domain in the interval 476 to 511 (LPNSVLGKIWKLADIDKDGMLDDEEFALANHLIKVK). Ca(2+)-binding residues include D489, D491, D493, M495, and E500. K511 is covalently cross-linked (Glycyl lysine isopeptide (Lys-Gly) (interchain with G-Cter in SUMO)).

It belongs to the TRAFAC class dynamin-like GTPase superfamily. Dynamin/Fzo/YdjA family. EHD subfamily. As to quaternary structure, homooligomer. Heterooligomer with EHD1. Heterooligomer with EHD2 and EHD4; ATP-binding is required for heterooligomerization. Interacts with PACSIN1. Interacts with PACSIN2. Interacts (via EH domain) with MICALL1. Interacts (via EH domain) with RAB11FIP2. Interacts with ANK2. Interacts with CACNA1GG and CACNA1H. Strong expression seen in the kidney, brain and liver. In the kidney, expressed exclusively by glomerular endothelial cells; at protein level. Expressed in skeletal muscle neuromuscular junction perisynaptic region; at protein level.

The protein resides in the recycling endosome membrane. Its subcellular location is the cell membrane. It localises to the cell projection. The protein localises to the cilium membrane. It is found in the cytoplasmic vesicle. Functionally, ATP- and membrane-binding protein that controls membrane reorganization/tubulation upon ATP hydrolysis. In vitro causes tubulation of endocytic membranes. Binding to phosphatidic acid induces its membrane tubulation activity. Plays a role in endocytic transport. Involved in early endosome to recycling endosome compartment (ERC), retrograde early endosome to Golgi, and endosome to plasma membrane (rapid recycling) protein transport. Involved in the regulation of Golgi maintenance and morphology. Involved in the recycling of internalized D1 dopamine receptor. Plays a role in cardiac protein trafficking probably implicating ANK2. Involved in the ventricular membrane targeting of SLC8A1 and CACNA1C and probably the atrial membrane localization of CACNA1GG and CACNA1H implicated in the regulation of atrial myocyte excitability and cardiac conduction. In conjunction with EHD4 may be involved in endocytic trafficking of KDR/VEGFR2 implicated in control of glomerular function. Involved in the rapid recycling of integrin beta-3 implicated in cell adhesion maintenance. Involved in the unidirectional retrograde dendritic transport of endocytosed BACE1 and in efficient sorting of BACE1 to axons implicating a function in neuronal APP processing. Plays a role in the formation of the ciliary vesicle, an early step in cilium biogenesis; possibly sharing redundant functions with Ehd1. The protein is EH domain-containing protein 3 of Mus musculus (Mouse).